A 185-amino-acid chain; its full sequence is Elongation factor P (185 aa).

It belongs to the elongation factor P family.

It is found in the cytoplasm. It functions in the pathway protein biosynthesis; polypeptide chain elongation. Involved in peptide bond synthesis. Stimulates efficient translation and peptide-bond synthesis on native or reconstituted 70S ribosomes in vitro. Probably functions indirectly by altering the affinity of the ribosome for aminoacyl-tRNA, thus increasing their reactivity as acceptors for peptidyl transferase. The protein is Elongation factor P (efp) of Synechococcus elongatus (strain ATCC 33912 / PCC 7942 / FACHB-805) (Anacystis nidulans R2).